Here is a 57-residue protein sequence, read N- to C-terminus: DNA-directed RNA polymerase subunit Rpo6 (57 aa).

Belongs to the archaeal Rpo6/eukaryotic RPB6 RNA polymerase subunit family. As to quaternary structure, part of the RNA polymerase complex.

The protein resides in the cytoplasm. It catalyses the reaction RNA(n) + a ribonucleoside 5'-triphosphate = RNA(n+1) + diphosphate. Functionally, DNA-dependent RNA polymerase (RNAP) catalyzes the transcription of DNA into RNA using the four ribonucleoside triphosphates as substrates. The protein is DNA-directed RNA polymerase subunit Rpo6 of Methanocaldococcus jannaschii (strain ATCC 43067 / DSM 2661 / JAL-1 / JCM 10045 / NBRC 100440) (Methanococcus jannaschii).